The sequence spans 161 residues: MNLAISIALLLTVLQVSRGQKVTSLTACLVDQSLRLDCRHENTSSSPIQYEFSLTRETKKHVLFGTVGVPEHTYRSRTNFTSKYNMKVLYLSAFTSKDEGTYTCALHHSGHSPPISSQNVTVLRDKLVKCEGISLLAQNTSWLLLLLLSLSLLQATDFMSL.

An N-terminal signal peptide occupies residues M1–G19. A Pyrrolidone carboxylic acid modification is found at Q20. One can recognise an Ig-like V-type domain in the interval Q20–K126. 2 disulfides stabilise this stretch: C28-C130 and C38-C104. N-linked (GlcNAc...) asparagine glycans are attached at residues N42 and N79. S82 bears the Phosphoserine mark. N119 carries N-linked (GlcNAc...) asparagine glycosylation. C130 carries the GPI-anchor amidated cysteine; alternate lipid modification. Positions E131–L161 are cleaved as a propeptide — removed in mature form. N139 carries an N-linked (GlcNAc...) asparagine glycan.

It localises to the cell membrane. Functionally, may play a role in cell-cell or cell-ligand interactions during synaptogenesis and other events in the brain. The protein is Thy-1 membrane glycoprotein (THY1) of Homo sapiens (Human).